The chain runs to 154 residues: Protein phosphatase 1 regulatory subunit 27 (154 aa).

2 ANK repeats span residues Ser-63–Gln-92 and Ala-96–Ala-125.

Interacts with DYSF and PPP1CA.

Its function is as follows. Inhibits phosphatase activity of protein phosphatase 1 (PP1) complexes. The sequence is that of Protein phosphatase 1 regulatory subunit 27 (PPP1R27) from Homo sapiens (Human).